We begin with the raw amino-acid sequence, 321 residues long: MNRPERLQPGVKLRDADKVARIPVKIVPSERETMLRKPDWLRVKLPASNQRILEIKAALRKNGLHSVCEEASCPNLSECFNHGTATFMILGAICTRRCPFCDVAHGRPLKPDAEEPVKLAQTIRDMKLKYVVITSVDRDDLRDGGAQHFADCIREIRKLNPDIKIETLVPDFRGRIDAALDILSAEPPDVFNHNLETAPAHYRKARPGANYQWSLDLLKRFKERHPHIPTKSGLMMGLGETNEEIAEVLRDLRSHNVEMLTLGQYLQPSKFHLPVVRYVPPAEFDELKVLADELGFTHAACGPMVRSSYHADLQAQGKEVK.

Residues C68, C73, C79, C94, C98, C101, and S308 each coordinate [4Fe-4S] cluster. A Radical SAM core domain is found at 80 to 297; the sequence is FNHGTATFMI…KVLADELGFT (218 aa).

This sequence belongs to the radical SAM superfamily. Lipoyl synthase family. [4Fe-4S] cluster serves as cofactor.

The protein localises to the cytoplasm. It carries out the reaction [[Fe-S] cluster scaffold protein carrying a second [4Fe-4S](2+) cluster] + N(6)-octanoyl-L-lysyl-[protein] + 2 oxidized [2Fe-2S]-[ferredoxin] + 2 S-adenosyl-L-methionine + 4 H(+) = [[Fe-S] cluster scaffold protein] + N(6)-[(R)-dihydrolipoyl]-L-lysyl-[protein] + 4 Fe(3+) + 2 hydrogen sulfide + 2 5'-deoxyadenosine + 2 L-methionine + 2 reduced [2Fe-2S]-[ferredoxin]. The protein operates within protein modification; protein lipoylation via endogenous pathway; protein N(6)-(lipoyl)lysine from octanoyl-[acyl-carrier-protein]: step 2/2. In terms of biological role, catalyzes the radical-mediated insertion of two sulfur atoms into the C-6 and C-8 positions of the octanoyl moiety bound to the lipoyl domains of lipoate-dependent enzymes, thereby converting the octanoylated domains into lipoylated derivatives. The polypeptide is Lipoyl synthase (Shewanella denitrificans (strain OS217 / ATCC BAA-1090 / DSM 15013)).